A 269-amino-acid chain; its full sequence is MNLNNLENIRYNEIKEFSDKIKKEFTFSQKKQVMDIIEKLNKDSRKNVIKLGQALEKFLNKYEEELKRTNNMYNFDRRYGNNYLIAGVDEVGRGPLAGPIVAAAVVLDLNVEEMQRVFNIKDSKKLSEKKREELDIIIREKAISYNIALVDNKTIDERGISWSNNEVLKRAVEGLKVKPDLVLSDGYAVKNLNIRNEFIIKGDSKSISIASSSIIAKVYRDSMMKEYSKGLNMYGFNHNAGYGTEEHVQAIKKHGPSKIHRMSFLTNIL.

Residues 83 to 269 (YLIAGVDEVG…HRMSFLTNIL (187 aa)) form the RNase H type-2 domain. Aspartate 89, glutamate 90, and aspartate 185 together coordinate a divalent metal cation.

It belongs to the RNase HII family. Mn(2+) is required as a cofactor. Requires Mg(2+) as cofactor.

The protein localises to the cytoplasm. It catalyses the reaction Endonucleolytic cleavage to 5'-phosphomonoester.. Endonuclease that specifically degrades the RNA of RNA-DNA hybrids. The sequence is that of Ribonuclease HII from Clostridium botulinum (strain ATCC 19397 / Type A).